The chain runs to 361 residues: Spermidine/putrescine import ATP-binding protein PotA (361 aa).

An ABC transporter domain is found at 4–234 (LEIKNVVKRF…PKNRFVADFL (231 aa)). An ATP-binding site is contributed by 36-43 (GPSGCGKT).

This sequence belongs to the ABC transporter superfamily. Spermidine/putrescine importer (TC 3.A.1.11.1) family. The complex is composed of two ATP-binding proteins (PotA), two transmembrane proteins (PotB and PotC) and a solute-binding protein (PotD).

The protein localises to the cell inner membrane. The enzyme catalyses ATP + H2O + polyamine-[polyamine-binding protein]Side 1 = ADP + phosphate + polyamineSide 2 + [polyamine-binding protein]Side 1.. Part of the ABC transporter complex PotABCD involved in spermidine/putrescine import. Responsible for energy coupling to the transport system. In Chromobacterium violaceum (strain ATCC 12472 / DSM 30191 / JCM 1249 / CCUG 213 / NBRC 12614 / NCIMB 9131 / NCTC 9757 / MK), this protein is Spermidine/putrescine import ATP-binding protein PotA.